The chain runs to 357 residues: 3-isopropylmalate dehydrogenase (357 aa).

NAD(+) is bound at residue 76-89; the sequence is GPQWDTIDPSLRPE. The substrate site is built by arginine 96, arginine 106, arginine 134, and aspartate 224. Residues aspartate 224, aspartate 248, and aspartate 252 each contribute to the Mg(2+) site. An NAD(+)-binding site is contributed by 282 to 294; that stretch reads GSAPDIAGKGIAN.

The protein belongs to the isocitrate and isopropylmalate dehydrogenases family. LeuB type 1 subfamily. Homodimer. It depends on Mg(2+) as a cofactor. The cofactor is Mn(2+).

The protein resides in the cytoplasm. It carries out the reaction (2R,3S)-3-isopropylmalate + NAD(+) = 4-methyl-2-oxopentanoate + CO2 + NADH. The protein operates within amino-acid biosynthesis; L-leucine biosynthesis; L-leucine from 3-methyl-2-oxobutanoate: step 3/4. In terms of biological role, catalyzes the oxidation of 3-carboxy-2-hydroxy-4-methylpentanoate (3-isopropylmalate) to 3-carboxy-4-methyl-2-oxopentanoate. The product decarboxylates to 4-methyl-2 oxopentanoate. The chain is 3-isopropylmalate dehydrogenase from Xanthomonas euvesicatoria pv. vesicatoria (strain 85-10) (Xanthomonas campestris pv. vesicatoria).